An 833-amino-acid polypeptide reads, in one-letter code: Probable glucan 1,3-beta-glucosidase D (833 aa).

Residues 1 to 33 (MPTHSRSRDRYGGRDSDREARYDYDYARRRYAT) show a composition bias toward basic and acidic residues. A disordered region spans residues 1 to 228 (MPTHSRSRDR…RKRQKKLAVV (228 aa)). Topologically, residues 1-305 (MPTHSRSRDR…GGRPFWKRKR (305 aa)) are cytoplasmic. Residues 34–45 (DDDDDYDDDELE) show a composition bias toward acidic residues. 2 stretches are compositionally biased toward basic and acidic residues: residues 46–75 (HDLT…RDAE) and 97–172 (YGDD…ETAA). Over residues 183–196 (SASHLLSADALAKL) the composition is skewed to low complexity. Residues 200–217 (YEKEERRKREIAKDAAKA) are compositionally biased toward basic and acidic residues. Residues 306-326 (WIGLGALIIILVIVIPVAVVV) form a helical; Signal-anchor for type II membrane protein membrane-spanning segment. Residues 327-833 (SKKHDNKSDP…PDFGDLPEYY (507 aa)) lie on the Extracellular side of the membrane. The segment at 331 to 353 (DNKSDPADSQGTSPGKSNLDGLS) is disordered. N-linked (GlcNAc...) asparagine glycosylation is present at Asn332. Over residues 337-346 (ADSQGTSPGK) the composition is skewed to polar residues. 6 N-linked (GlcNAc...) asparagine glycosylation sites follow: Asn378, Asn383, Asn395, Asn548, Asn560, and Asn569. Glu599 acts as the Proton donor in catalysis. 3 N-linked (GlcNAc...) asparagine glycosylation sites follow: Asn638, Asn671, and Asn691. The active-site Nucleophile is Glu704.

Belongs to the glycosyl hydrolase 5 (cellulase A) family.

The protein localises to the cell membrane. It carries out the reaction Successive hydrolysis of beta-D-glucose units from the non-reducing ends of (1-&gt;3)-beta-D-glucans, releasing alpha-glucose.. Glucosidase involved in the degradation of cellulosic biomass. Active on lichenan. In Aspergillus fumigatus (strain CBS 144.89 / FGSC A1163 / CEA10) (Neosartorya fumigata), this protein is Probable glucan 1,3-beta-glucosidase D (exgD).